The following is a 781-amino-acid chain: Catenin beta-1 (781 aa).

Position 2 is an N-acetylalanine (Ala2). Residues 2–23 (ATQADLMELDMAMEPDRKAAVS) are interaction with VCL. Ser23 bears the Phosphoserine; by GSK3-beta; alternate mark. Residue Ser23 is glycosylated (O-linked (GlcNAc) serine; alternate). A Phosphoserine; by GSK3-beta modification is found at Ser29. Residues Ser33 and Ser37 each carry the phosphoserine; by GSK3-beta and HIPK2 modification. The disordered stretch occupies residues 34 to 57 (GIHSGATTTAPSLSGKGNPEEEDV). At Thr41 the chain carries Phosphothreonine; by GSK3-beta. Ser45 is subject to Phosphoserine. An N6-acetyllysine modification is found at Lys49. The residue at position 64 (Tyr64) is a Phosphotyrosine; by PTK6. Tyr142 is subject to Phosphotyrosine; by FYN and PTK6. ARM repeat units follow at residues 151–191 (RAIP…IMRS), 193–234 (QMVS…IFKS), 235–276 (GGIP…VRLA), 277–318 (GGLQ…ILAS), 319–360 (GGPQ…IVEA), 361–389 (GGMQ…RNLS), 400–441 (GLLG…VCQV), 442–484 (GGIE…AQNA), 489–530 (YGLP…LREQ), 531–571 (GAIP…EIVE), 594–636 (NTIP…AEGA), and 637–666 (TAPL…SEDK). Residues 156–178 (LTKLLNDEDQVVVNKAAVMVHQL) form an interaction with BCL9 region. Phosphoserine is present on Ser191. Phosphoserine; by CDK5 is present on Ser246. Tyr331 and Tyr333 each carry phosphotyrosine. Phosphoserine; by AMPK is present on Ser552. Phosphothreonine is present on Thr556. Position 619 is an S-nitrosocysteine (Cys619). Ser675 carries the post-translational modification Phosphoserine. Residues 720–781 (HSGGYGQDAL…NQLAWFDTDL (62 aa)) are disordered. Residues 734 to 745 (MMEHEMGGHHPG) are compositionally biased toward basic and acidic residues. Positions 772-781 (NQLAWFDTDL) are interaction with SCRIB.

This sequence belongs to the beta-catenin family. In terms of assembly, two separate complex-associated pools are found in the cytoplasm. The majority is present as component of an E-cadherin/ catenin adhesion complex composed of at least E-cadherin/CDH1 and beta-catenin/CTNNB1, and possibly alpha-catenin/CTNNA1; the complex is located to adherens junctions. The stable association of CTNNA1 is controversial as CTNNA1 was shown not to bind to F-actin when assembled in the complex. Alternatively, the CTNNA1-containing complex may be linked to F-actin by other proteins such as LIMA1. Binds NHERF1. Interacts with PTPRU (via the cytoplasmic juxtamembrane domain) and with EMD. Interacts with SESTD1 and TRPC4. Interacts with CAV1. Interacts with PTPRJ. Interacts with PKT7. Interacts with FAT1 (via the cytoplasmic domain). Interacts with CDK2, NDRG2 and NANOS1. Interacts with NEK2 and CDK5. Interacts with CARM1, CXADR, PCDH11Y and PTK6. Interacts with RAPGEF2. Interacts with SOX7; this interaction may lead to proteasomal degradation of active CTNNB1 and thus inhibition of Wnt/beta-catenin-stimulated transcription. Identified in a complex with HINT1 and MITF. Interacts with FHIT. Interacts with FERMT2. Identified in a complex with TCF4 and FERMT2. Another cytoplasmic pool is part of a large complex containing AXIN1, AXIN2, APC, CSNK1A1 and GSK3B that promotes phosphorylation on N-terminal Ser and Thr residues and ubiquitination of CTNNB1 via BTRC and its subsequent degradation by the proteasome. Wnt-dependent activation of DVL antagonizes the action of GSK3B. When GSK3B activity is inhibited the complex dissociates, CTNNB1 is dephosphorylated and is no longer targeted for destruction. The stabilized protein translocates to the nucleus, where it binds TCF/LEF-1 family members, BCL9, BCL9L and possibly also RUVBL1 and CHD8. Interacts with TAX1BP3 (via the PDZ domain); this interaction inhibits the transcriptional activity of CTNNB1. Interacts with AJAP1, BAIAP1 and CTNNA3. Interacts with TRPV4; the TRPV4 and CTNNB1 complex can interact with CDH1. Interacts with VCL. The CTNNB1 and TCF4 complex interacts with PML. Interacts with XIRP1. Binds CTNNBIP and EP300. CTNNB1 forms a ternary complex with LEF1 and EP300 that is disrupted by CTNNBIP1 binding. Interacts directly with AXIN1; the interaction is regulated by CDK2 phosphorylation of AXIN1. Interacts with GLIS2. Interacts with SCRIB. Interacts with TNIK and TCF7L2. Interacts with SLC30A9. Interacts with RORA. May interact with P-cadherin/CDH3. Interacts with RNF220. Interacts with CTNND2. Interacts (via the C-terminal region) with CBY1. The complex composed, at least, of APC, CTNNB1 and GSK3B interacts with JPT1; the interaction requires the inactive form of GSK3B (phosphorylated at 'Ser-9'). Interacts with DLG5. Interacts with FAM53B; promoting translocation to the nucleus. Interacts with TMEM170B. Interacts with AHI1. Interacts with GID8. Component of an cadherin:catenin adhesion complex composed of at least of CDH26, beta-catenin/CTNNB1, alpha-catenin/CTNNA1 and p120 catenin/CTNND1. Forms a complex comprising APPL1, RUVBL2, APPL2, HDAC1 and HDAC2. Interacts with IRF2BPL; mediates the ubiquitination and degradation of CTNNB1. Interacts with AMFR. Interacts with LMBR1L. Interacts with SOX30; prevents interaction of CTNNB1 with TCF7L2/TCF4 and leads to inhibition of Wnt signaling. Interacts with SOX9; inhibiting CTNNB1 activity by competing with the binding sites of TCF/LEF within CTNNB1, thereby inhibiting the Wnt signaling. Interacts with SPN/CD43 cytoplasmic tail. Interacts (when phosphorylated at Tyr-333) with isoform M2 of PKM (PKM2); promoting transcription activation. Interacts with PKP2 (via HEAD domain). Interacts with CDH1. Interacts (when unphosphorylated) with FLYWCH1, perhaps preventing interaction of CTNNB1 with TCF4, and thereby regulating transcription activation; phosphorylation of CTNNB1 may inhibit the interaction. Interacts (via the central armadillo domains) with probable transcriptional regulator ADNP (via N-terminal region); interaction is direct and stabilizes CTNNB1 by modulating its phosphorylation by glycogen synthase kinase-3 beta GSK3B. Interacts with NR5A2. Interacts with DSG2; the interaction promotes localization of CTNNB1 at cell junctions thus reducing its nuclear localization and subsequent transcription of CTNNB1/TCF-target genes. Phosphorylation at Ser-552 by AMPK promotes stabilization of the protein, enhancing TCF/LEF-mediated transcription. Phosphorylation by GSK3B requires prior phosphorylation of Ser-45 by another kinase. Phosphorylation proceeds then from Thr-41 to Ser-37 and Ser-33. Phosphorylated by NEK2. EGF stimulates tyrosine phosphorylation. Phosphorylated on Ser-33 and Ser-37 by HIPK2 and GSK3B, this phosphorylation triggers proteasomal degradation. Phosphorylation on Ser-191 and Ser-246 by CDK5. Phosphorylation by CDK2 regulates insulin internalization. Phosphorylation by PTK6 at Tyr-64, Tyr-142, Tyr-331 and/or Tyr-333 with the predominant site at Tyr-64 is not essential for inhibition of transcriptional activity. Phosphorylation by SRC at Tyr-333 promotes interaction with isoform M2 of PKM (PKM2); promoting transcription activation. Post-translationally, ubiquitinated by the SCF(BTRC) E3 ligase complex when phosphorylated by GSK3B, leading to its degradation. Ubiquitinated by a E3 ubiquitin ligase complex containing UBE2D1, SIAH1, CACYBP/SIP, SKP1, APC and TBL1X, leading to its subsequent proteasomal degradation. Ubiquitinated and degraded following interaction with SOX9. Ubiquitinated via 'Lys-11'- and 'Lys-29'-linked ubiquitin chains by UBR5, leading to its stabilization. In terms of processing, S-nitrosylation at Cys-619 within adherens junctions promotes VEGF-induced, NO-dependent endothelial cell permeability by disrupting interaction with E-cadherin, thus mediating disassembly adherens junctions. O-glycosylation at Ser-23 decreases nuclear localization and transcriptional activity, and increases localization to the plasma membrane and interaction with E-cadherin CDH1. Post-translationally, deacetylated at Lys-49 by SIRT1. As to expression, expressed in cerebellar granule neurons (at protein level). Expressed in the intestinal epithelium (at protein level). Abundantly expressed in the tooth, skin, lung, kidney, eye and brain with weak expression in the liver and heart.

It is found in the cytoplasm. The protein resides in the nucleus. It localises to the cytoskeleton. The protein localises to the cell junction. Its subcellular location is the adherens junction. It is found in the cell membrane. The protein resides in the microtubule organizing center. It localises to the centrosome. The protein localises to the spindle pole. Its subcellular location is the synapse. It is found in the cilium basal body. Key downstream component of the canonical Wnt signaling pathway. In the absence of Wnt, forms a complex with AXIN1, AXIN2, APC, CSNK1A1 and GSK3B that promotes phosphorylation on N-terminal Ser and Thr residues and ubiquitination of CTNNB1 via BTRC and its subsequent degradation by the proteasome. In the presence of Wnt ligand, CTNNB1 is not ubiquitinated and accumulates in the nucleus, where it acts as a coactivator for transcription factors of the TCF/LEF family, leading to activate Wnt responsive genes. Also acts as a coactivator for other transcription factors, such as NR5A2. Promotes epithelial to mesenchymal transition/mesenchymal to epithelial transition (EMT/MET) via driving transcription of CTNNB1/TCF-target genes. Involved in the regulation of cell adhesion, as component of an E-cadherin:catenin adhesion complex. Acts as a negative regulator of centrosome cohesion. Involved in the CDK2/PTPN6/CTNNB1/CEACAM1 pathway of insulin internalization. Blocks anoikis of malignant kidney and intestinal epithelial cells and promotes their anchorage-independent growth by down-regulating DAPK2. Disrupts PML function and PML-NB formation by inhibiting RANBP2-mediated sumoylation of PML. Promotes neurogenesis by maintaining sympathetic neuroblasts within the cell cycle. Involved in chondrocyte differentiation via interaction with SOX9: SOX9-binding competes with the binding sites of TCF/LEF within CTNNB1, thereby inhibiting the Wnt signaling. Acts as a positive regulator of odontoblast differentiation during mesenchymal tooth germ formation, via promoting the transcription of differentiation factors such as LEF1, BMP2 and BMP4. Activity is repressed in a MSX1-mediated manner at the bell stage of mesenchymal tooth germ formation which prevents premature differentiation of odontoblasts. This Mus musculus (Mouse) protein is Catenin beta-1.